The sequence spans 1185 residues: Mucin-6 (1185 aa).

2 disulfides stabilise this stretch: C1/C132 and C23/C168. The region spanning 1-169 (CSTWGGGHFS…KMDDPSEICL (169 aa)) is the VWFD 1 domain. Residue N223 is glycosylated (N-linked (GlcNAc...) (complex) asparagine). One can recognise a TIL 1 domain in the interval 257 to 312 (CSANQIYEECGSPCIKTCSNPEYSCSSHCTYGCFCPEGTVLDDISKNRTCVHLEQC). Positions 350-534 (GRCSLEGGSF…AMERETDPCA (185 aa)) constitute a VWFD 2 domain. Disulfide bonds link C352–C488 and C374–C533. TIL domains lie at 619–676 (CTGN…KSHC) and 737–782 (GATC…PEEC). The region spanning 821–993 (STCNLYGEGH…NSWKENPLCG (173 aa)) is the VWFD 3 domain. 4 disulfides stabilise this stretch: C823–C957, C845–C992, C854–C954, and C872–C879. N-linked (GlcNAc...) (complex) asparagine glycosylation occurs at N930. The segment covering 1160 to 1178 (PTATQPTSPSTSSASTVLT) has biased composition (low complexity). The disordered stretch occupies residues 1160–1185 (PTATQPTSPSTSSASTVLTETTNPPV).

As to quaternary structure, multimer; disulfide-linked. Post-translationally, N-glycosylated with N-acetylglucosamine (6.7%), N-acetylgalactosamine (0.6%), galactose (1.8%), mannose (4.6%), N-acetylneuraminic acid (1.0%) and sulfate-containing glycans (0.7%).

The protein resides in the secreted. Ovomucin, the glycoprotein responsible for the gel properties of egg white, is composed for 2 subunits, alpha-ovomucin/MUC5B and beta-ovomucin/MUC6. The chain is Mucin-6 (MUC6) from Gallus gallus (Chicken).